A 287-amino-acid polypeptide reads, in one-letter code: Protease HtpX (287 aa).

A run of 2 helical transmembrane segments spans residues isoleucine 4 to isoleucine 24 and glycine 33 to isoleucine 53. Position 139 (histidine 139) interacts with Zn(2+). Residue glutamate 140 is part of the active site. Histidine 143 is a Zn(2+) binding site. 2 helical membrane-spanning segments follow: residues leucine 154–isoleucine 174 and alanine 195–phenylalanine 215. A Zn(2+)-binding site is contributed by glutamate 220.

Belongs to the peptidase M48B family. Requires Zn(2+) as cofactor.

It localises to the cell inner membrane. This chain is Protease HtpX, found in Shewanella baltica (strain OS223).